A 1148-amino-acid polypeptide reads, in one-letter code: Pyruvate carboxylase (1148 aa).

The Biotin carboxylation domain maps to 1–457; it reads MSQQSIQKVL…DTSFIDTTPE (457 aa). ATP contacts are provided by lysine 121, glutamate 205, and histidine 240. The ATP-grasp domain occupies 125–321; the sequence is REQAEKAGIP…IVQTQILVAQ (197 aa). Lysine 242 is a catalytic residue. The 269-residue stretch at 534-802 folds into the Pyruvate carboxyltransferase domain; it reads VLLTDTTFRD…RPEMNVQGVE (269 aa). Substrate contacts are provided by residues 542–546 and arginine 615; that span reads RDAHQ. Residue aspartate 543 participates in a divalent metal cation binding. Residues lysine 712, histidine 741, and histidine 743 each contribute to the a divalent metal cation site. An N6-carboxylysine modification is found at lysine 712. Threonine 876 is a substrate binding site. In terms of domain architecture, Biotinyl-binding spans 1071-1146; it reads KADRTNPSHI…QTGDLLLEIE (76 aa). At lysine 1112 the chain carries N6-biotinyllysine.

As to quaternary structure, homotetramer. At very low potassium concentrations, when intracellular levels of c-di-AMP are low, interacts with apo-DarB. c-di-AMP inhibits the binding of DarB to PYC. Does not bind directly c-di-AMP. The cofactor is biotin.

The catalysed reaction is hydrogencarbonate + pyruvate + ATP = oxaloacetate + ADP + phosphate + H(+). With respect to regulation, activated by the cyclic di-AMP (c-di-AMP) receptor DarB in the absence of c-di-AMP. Allosterically activated by acetyl-CoA. Inhibited by the biotin-complexing protein avidin. Its function is as follows. Catalyzes a 2-step reaction, involving the ATP-dependent carboxylation of the covalently attached biotin in the first step and the transfer of the carboxyl group to pyruvate in the second, leading to oxaloacetate production. Fulfills an anaplerotic function in B.subtilis as it is necessary for growth on glucose, but is not required for sporulation. The chain is Pyruvate carboxylase (pyc) from Bacillus subtilis (strain 168).